The following is a 380-amino-acid chain: MFSRTDLEAREAATLCPYATLSRDTRGREYPEAESATRTAFQKDRDRVLHTTAFRRLEAKTQVFLNVSYSGHADHYRTRLTHTLEVQQVARSVALNLGLNETLAETIALTHDLGHPPFGHAGERVLNALMHDHGGFNHNTQARRIVTHLESRYPDFPGLNLTLDTLDGLNKHDRAGIGHASLEAQLVDAADALAYTAHDLDDGLRSGLITPAQLQELPLWRELLARVPGTPAPLTSRERRILHRELLGWLIRDLTQASAQAIAQSGVQTAAEARAYPERLMTYSGAMRDLLRSAGTFLREHLYRHWRVEMQVEQAERVLTTLFRAYTARPSLLPPAASARAEHSGLPRAVCDHIAGMTDRYALETHAAITPPGAPTSWPH.

Residues 79-196 enclose the HD domain; the sequence is RLTHTLEVQQ…VDAADALAYT (118 aa).

Belongs to the dGTPase family. Type 2 subfamily.

The polypeptide is Deoxyguanosinetriphosphate triphosphohydrolase-like protein (Deinococcus deserti (strain DSM 17065 / CIP 109153 / LMG 22923 / VCD115)).